Reading from the N-terminus, the 405-residue chain is Tryptophan synthase beta chain (405 aa).

K98 is modified (N6-(pyridoxal phosphate)lysine).

This sequence belongs to the TrpB family. As to quaternary structure, tetramer of two alpha and two beta chains. Requires pyridoxal 5'-phosphate as cofactor.

It catalyses the reaction (1S,2R)-1-C-(indol-3-yl)glycerol 3-phosphate + L-serine = D-glyceraldehyde 3-phosphate + L-tryptophan + H2O. It functions in the pathway amino-acid biosynthesis; L-tryptophan biosynthesis; L-tryptophan from chorismate: step 5/5. Its function is as follows. The beta subunit is responsible for the synthesis of L-tryptophan from indole and L-serine. The protein is Tryptophan synthase beta chain of Xylella fastidiosa (strain M12).